The sequence spans 501 residues: Lysine--tRNA ligase (501 aa).

Positions 404 and 411 each coordinate Mg(2+).

It belongs to the class-II aminoacyl-tRNA synthetase family. In terms of assembly, homodimer. The cofactor is Mg(2+).

The protein localises to the cytoplasm. It catalyses the reaction tRNA(Lys) + L-lysine + ATP = L-lysyl-tRNA(Lys) + AMP + diphosphate. The chain is Lysine--tRNA ligase from Campylobacter jejuni (strain RM1221).